Consider the following 74-residue polypeptide: Ferredoxin MycCII (74 aa).

Positions 1-29 (MRIVLDAERCVGAGQCEATAPELFTQGDD) constitute a 4Fe-4S ferredoxin-type domain. The [3Fe-4S] cluster site is built by C10, C16, and C54.

The cofactor is [3Fe-4S] cluster.

The protein operates within antibiotic biosynthesis; mycinamicin biosynthesis. Its function is as follows. Specific electron transport protein capable of effectively supporting cytochrome P450 MycCI activity in the biosynthesis of mycinamicin, a 16-membered macrolide antibiotic. This Micromonospora griseorubida protein is Ferredoxin MycCII.